The following is a 156-amino-acid chain: Small ribosomal subunit protein uS7 (156 aa).

The protein belongs to the universal ribosomal protein uS7 family. As to quaternary structure, part of the 30S ribosomal subunit. Contacts proteins S9 and S11.

Its function is as follows. One of the primary rRNA binding proteins, it binds directly to 16S rRNA where it nucleates assembly of the head domain of the 30S subunit. Is located at the subunit interface close to the decoding center, probably blocks exit of the E-site tRNA. This Neisseria meningitidis serogroup C (strain 053442) protein is Small ribosomal subunit protein uS7.